Here is a 377-residue protein sequence, read N- to C-terminus: MPVLEHVDSLLYLGLMSGTSADGIDAALVRFAEDTHRRCELVAGTTVAWEPQLRETLVALGQGAETVAIDALGQLDAQVGLAFAAAANQLIRDSGVERRRIRAIGSHGQTIRHRPEADPAFTWQIGDASRIAEHTGITTVADFRRRDVAAGGQGAPLMPAFHLAMLGAGDQDSAVLNLGGIGNLTLIPRDGAVLGFDTGPANALLDSWCQRHHGTPFDAEGAFAASGRVDAALLQALLADPWFALPPPKSTGREQFHLDWVLQAMGSARLDAADVQATLLELTAASVADALLRLQPSTRRVLVCGGGVRNPVLLARLAARLPGVVVESSARYGLDPDYLEAMGFAWLAAELLAGRAANLPSVTGAAGPRLLGAIYPA.

18–25 is an ATP binding site; the sequence is GTSADGID.

Belongs to the anhydro-N-acetylmuramic acid kinase family.

The enzyme catalyses 1,6-anhydro-N-acetyl-beta-muramate + ATP + H2O = N-acetyl-D-muramate 6-phosphate + ADP + H(+). Its pathway is amino-sugar metabolism; 1,6-anhydro-N-acetylmuramate degradation. The protein operates within cell wall biogenesis; peptidoglycan recycling. In terms of biological role, catalyzes the specific phosphorylation of 1,6-anhydro-N-acetylmuramic acid (anhMurNAc) with the simultaneous cleavage of the 1,6-anhydro ring, generating MurNAc-6-P. Is required for the utilization of anhMurNAc either imported from the medium or derived from its own cell wall murein, and thus plays a role in cell wall recycling. The chain is Anhydro-N-acetylmuramic acid kinase from Xanthomonas oryzae pv. oryzae (strain MAFF 311018).